The primary structure comprises 123 residues: Large ribosomal subunit protein bL12 (123 aa).

It belongs to the bacterial ribosomal protein bL12 family. As to quaternary structure, homodimer. Part of the ribosomal stalk of the 50S ribosomal subunit. Forms a multimeric L10(L12)X complex, where L10 forms an elongated spine to which 2 to 4 L12 dimers bind in a sequential fashion. Binds GTP-bound translation factors.

Forms part of the ribosomal stalk which helps the ribosome interact with GTP-bound translation factors. Is thus essential for accurate translation. The chain is Large ribosomal subunit protein bL12 from Dehalococcoides mccartyi (strain ATCC BAA-2100 / JCM 16839 / KCTC 5957 / BAV1).